Reading from the N-terminus, the 20-residue chain is Dihydrolipoamide-residue succinyltransferase component of 2-oxoglutarate dehydrogenase complex (20 aa).

The protein belongs to the 2-oxoacid dehydrogenase family. As to quaternary structure, forms a 24-polypeptide structural core with octahedral symmetry. The cofactor is (R)-lipoate.

The protein resides in the mitochondrion membrane. It catalyses the reaction N(6)-[(R)-dihydrolipoyl]-L-lysyl-[protein] + succinyl-CoA = N(6)-[(R)-S(8)-succinyldihydrolipoyl]-L-lysyl-[protein] + CoA. Its pathway is amino-acid degradation; L-lysine degradation via saccharopine pathway; glutaryl-CoA from L-lysine: step 6/6. Functionally, the 2-oxoglutarate dehydrogenase complex catalyzes the overall conversion of 2-oxoglutarate to succinyl-CoA and CO(2). It contains multiple copies of three enzymatic components: 2-oxoglutarate dehydrogenase (E1), dihydrolipoamide succinyltransferase (E2) and lipoamide dehydrogenase (E3). The sequence is that of Dihydrolipoamide-residue succinyltransferase component of 2-oxoglutarate dehydrogenase complex from Solanum tuberosum (Potato).